The following is a 109-amino-acid chain: Putative membrane protein insertion efficiency factor (109 aa).

Belongs to the UPF0161 family.

It localises to the cell inner membrane. In terms of biological role, could be involved in insertion of integral membrane proteins into the membrane. In Rhodopseudomonas palustris (strain BisB18), this protein is Putative membrane protein insertion efficiency factor.